The following is a 220-amino-acid chain: Ribose-5-phosphate isomerase A (220 aa).

Substrate contacts are provided by residues 28–31, 81–84, and 94–97; these read TGST, DGAD, and KGGG. Glutamate 103 acts as the Proton acceptor in catalysis. Lysine 121 is a binding site for substrate.

Belongs to the ribose 5-phosphate isomerase family. In terms of assembly, homodimer.

The enzyme catalyses aldehydo-D-ribose 5-phosphate = D-ribulose 5-phosphate. It participates in carbohydrate degradation; pentose phosphate pathway; D-ribose 5-phosphate from D-ribulose 5-phosphate (non-oxidative stage): step 1/1. Its function is as follows. Catalyzes the reversible conversion of ribose-5-phosphate to ribulose 5-phosphate. This Leptothrix cholodnii (strain ATCC 51168 / LMG 8142 / SP-6) (Leptothrix discophora (strain SP-6)) protein is Ribose-5-phosphate isomerase A.